The chain runs to 299 residues: Tyrosine recombinase XerC (299 aa).

In terms of domain architecture, Core-binding (CB) spans 1–85 (MDQHLDAYCM…AVRGFYKYLN (85 aa)). Residues 106–285 (RLPKTLDTDR…DFQHLATVYD (180 aa)) form the Tyr recombinase domain. Residues Arg-146, Lys-170, His-237, Arg-240, and His-263 contribute to the active site. Catalysis depends on Tyr-272, which acts as the O-(3'-phospho-DNA)-tyrosine intermediate.

This sequence belongs to the 'phage' integrase family. XerC subfamily. Forms a cyclic heterotetrameric complex composed of two molecules of XerC and two molecules of XerD.

It is found in the cytoplasm. Site-specific tyrosine recombinase, which acts by catalyzing the cutting and rejoining of the recombining DNA molecules. The XerC-XerD complex is essential to convert dimers of the bacterial chromosome into monomers to permit their segregation at cell division. It also contributes to the segregational stability of plasmids. In Pseudomonas syringae pv. syringae (strain B728a), this protein is Tyrosine recombinase XerC.